The chain runs to 292 residues: 4-hydroxy-tetrahydrodipicolinate synthase (292 aa).

Thr45 contacts pyruvate. Residue Tyr133 is the Proton donor/acceptor of the active site. The active-site Schiff-base intermediate with substrate is Lys161. Ile203 is a binding site for pyruvate.

Belongs to the DapA family. In terms of assembly, homodimer.

It localises to the cytoplasm. It carries out the reaction L-aspartate 4-semialdehyde + pyruvate = (2S,4S)-4-hydroxy-2,3,4,5-tetrahydrodipicolinate + H2O + H(+). Its pathway is amino-acid biosynthesis; L-lysine biosynthesis via DAP pathway; (S)-tetrahydrodipicolinate from L-aspartate: step 3/4. Catalyzes the condensation of (S)-aspartate-beta-semialdehyde [(S)-ASA] and pyruvate to 4-hydroxy-tetrahydrodipicolinate (HTPA). This is 4-hydroxy-tetrahydrodipicolinate synthase from Pseudomonas aeruginosa (strain ATCC 15692 / DSM 22644 / CIP 104116 / JCM 14847 / LMG 12228 / 1C / PRS 101 / PAO1).